A 664-amino-acid chain; its full sequence is Exoribonuclease 2 (664 aa).

The RNB domain maps to 193–521; the sequence is RIDMTHIPFV…INHRMLKALI (329 aa). The S1 motif domain maps to 568-650; the sequence is QTLFTGEIFD…ENRSLVAKPT (83 aa).

The protein belongs to the RNR ribonuclease family. RNase II subfamily.

It is found in the cytoplasm. The catalysed reaction is Exonucleolytic cleavage in the 3'- to 5'-direction to yield nucleoside 5'-phosphates.. Functionally, involved in mRNA degradation. Hydrolyzes single-stranded polyribonucleotides processively in the 3' to 5' direction. The sequence is that of Exoribonuclease 2 from Vibrio vulnificus (strain CMCP6).